Here is a 427-residue protein sequence, read N- to C-terminus: Dihydroorotase (427 aa).

Positions 58 and 60 each coordinate Zn(2+). Substrate contacts are provided by residues 60-62 (HYR) and Asn92. Zn(2+)-binding residues include Asp150, His177, and His230. Asn276 contacts substrate. Asp303 contributes to the Zn(2+) binding site. Residue Asp303 is part of the active site. Residues His307 and 321–322 (FG) each bind substrate.

This sequence belongs to the metallo-dependent hydrolases superfamily. DHOase family. Class I DHOase subfamily. Zn(2+) serves as cofactor.

The catalysed reaction is (S)-dihydroorotate + H2O = N-carbamoyl-L-aspartate + H(+). The protein operates within pyrimidine metabolism; UMP biosynthesis via de novo pathway; (S)-dihydroorotate from bicarbonate: step 3/3. In terms of biological role, catalyzes the reversible cyclization of carbamoyl aspartate to dihydroorotate. This is Dihydroorotase from Lactobacillus leichmannii.